The primary structure comprises 202 residues: ATP-dependent Clp protease proteolytic subunit (202 aa).

The active-site Nucleophile is Ser-101. Residue His-126 is part of the active site.

Belongs to the peptidase S14 family. As to quaternary structure, component of the chloroplastic Clp protease core complex.

It is found in the plastid. Its subcellular location is the chloroplast stroma. It carries out the reaction Hydrolysis of proteins to small peptides in the presence of ATP and magnesium. alpha-casein is the usual test substrate. In the absence of ATP, only oligopeptides shorter than five residues are hydrolyzed (such as succinyl-Leu-Tyr-|-NHMec, and Leu-Tyr-Leu-|-Tyr-Trp, in which cleavage of the -Tyr-|-Leu- and -Tyr-|-Trp bonds also occurs).. Functionally, cleaves peptides in various proteins in a process that requires ATP hydrolysis. Has a chymotrypsin-like activity. Plays a major role in the degradation of misfolded proteins. The sequence is that of ATP-dependent Clp protease proteolytic subunit from Liriodendron tulipifera (Tuliptree).